Reading from the N-terminus, the 443-residue chain is C4-dicarboxylate transport protein (443 aa).

10 helical membrane-spanning segments follow: residues 10-30, 46-66, 78-98, 130-150, 152-172, 199-219, 224-244, 291-311, 332-352, and 354-374; these read SLYFQVIVAIAIGILLGHFYP, LIKMVIAPIIFCTVVSGIAGM, YALLYFEIVSTIALLIGLIVV, SIVGFILNIIPATIVGAFANG, ILQVLMFSVVFGFALHRLGAY, PLGALGAMAFTIGAYGVGSLV, LMICFYITCVVFVLVVLGAIC, VVGLVIPTGYSFNLDGTSIYL, ITLLLVLLLSSKGAAGVTGSG, and IVLAATLSAVGHLPVAGLALI. The segment at 415–443 is disordered; it reads ELASGGRPITDTRETDDLGVAEGPAPSIK.

It belongs to the dicarboxylate/amino acid:cation symporter (DAACS) (TC 2.A.23) family.

It is found in the cell inner membrane. Functionally, responsible for the transport of dicarboxylates such as succinate, fumarate, and malate from the periplasm across the membrane. This Pseudomonas fluorescens (strain ATCC BAA-477 / NRRL B-23932 / Pf-5) protein is C4-dicarboxylate transport protein.